The following is a 173-amino-acid chain: Large ribosomal subunit protein uL10 (173 aa).

This sequence belongs to the universal ribosomal protein uL10 family. As to quaternary structure, part of the ribosomal stalk of the 50S ribosomal subunit. The N-terminus interacts with L11 and the large rRNA to form the base of the stalk. The C-terminus forms an elongated spine to which L12 dimers bind in a sequential fashion forming a multimeric L10(L12)X complex.

Its function is as follows. Forms part of the ribosomal stalk, playing a central role in the interaction of the ribosome with GTP-bound translation factors. In Micrococcus luteus (strain ATCC 4698 / DSM 20030 / JCM 1464 / CCM 169 / CCUG 5858 / IAM 1056 / NBRC 3333 / NCIMB 9278 / NCTC 2665 / VKM Ac-2230) (Micrococcus lysodeikticus), this protein is Large ribosomal subunit protein uL10.